Here is a 359-residue protein sequence, read N- to C-terminus: 3-dehydroquinate synthase (359 aa).

NAD(+)-binding positions include 71-76 (DGEQFK), 105-109 (GVIGD), 129-130 (TT), lysine 142, lysine 151, and 169-172 (CLQT). Positions 184, 247, and 264 each coordinate Zn(2+).

The protein belongs to the sugar phosphate cyclases superfamily. Dehydroquinate synthase family. Co(2+) is required as a cofactor. Zn(2+) serves as cofactor. It depends on NAD(+) as a cofactor.

The protein localises to the cytoplasm. The catalysed reaction is 7-phospho-2-dehydro-3-deoxy-D-arabino-heptonate = 3-dehydroquinate + phosphate. It participates in metabolic intermediate biosynthesis; chorismate biosynthesis; chorismate from D-erythrose 4-phosphate and phosphoenolpyruvate: step 2/7. In terms of biological role, catalyzes the conversion of 3-deoxy-D-arabino-heptulosonate 7-phosphate (DAHP) to dehydroquinate (DHQ). The chain is 3-dehydroquinate synthase from Shewanella sp. (strain ANA-3).